A 182-amino-acid chain; its full sequence is Inorganic pyrophosphatase (182 aa).

Residues K30, R44, and Y56 each coordinate substrate. Mg(2+)-binding residues include D66, D71, and D103. Y142 is a binding site for substrate.

The protein belongs to the PPase family. In terms of assembly, homohexamer. Requires Mg(2+) as cofactor.

It is found in the cytoplasm. It catalyses the reaction diphosphate + H2O = 2 phosphate + H(+). Catalyzes the hydrolysis of inorganic pyrophosphate (PPi) forming two phosphate ions. This chain is Inorganic pyrophosphatase, found in Buchnera aphidicola subsp. Acyrthosiphon pisum (strain APS) (Acyrthosiphon pisum symbiotic bacterium).